The primary structure comprises 308 residues: Leucine-rich repeat-containing protein 59 (308 aa).

Residues Met1–Lys248 lie on the Cytoplasmic side of the membrane. LRR repeat units lie at residues Asn10–Pro31, Lys40–Leu61, Tyr63–Leu84, Asn86–Leu107, and Ser109–Ala128. A coiled-coil region spans residues Asp154 to Glu223. 3 stretches are compositionally biased toward basic and acidic residues: residues Lys170 to Leu187, Gln194 to Tyr203, and Lys218 to Lys237. A disordered region spans residues Lys170–Ala240. A helical membrane pass occupies residues Ile249 to Phe269. The Lumenal segment spans residues Thr270–Gln308.

Interacts with SGO1.

It is found in the microsome membrane. Its subcellular location is the endoplasmic reticulum membrane. It localises to the nucleus envelope. Functionally, required for nuclear import of FGF1. This Xenopus tropicalis (Western clawed frog) protein is Leucine-rich repeat-containing protein 59 (lrrc59).